The following is a 310-amino-acid chain: tRNA-cytidine(32) 2-sulfurtransferase (310 aa).

The PP-loop motif signature appears at 45-50; sequence SGGKDS. Residues cysteine 120, cysteine 123, and cysteine 211 each contribute to the [4Fe-4S] cluster site.

It belongs to the TtcA family. As to quaternary structure, homodimer. It depends on Mg(2+) as a cofactor. [4Fe-4S] cluster serves as cofactor.

The protein resides in the cytoplasm. The enzyme catalyses cytidine(32) in tRNA + S-sulfanyl-L-cysteinyl-[cysteine desulfurase] + AH2 + ATP = 2-thiocytidine(32) in tRNA + L-cysteinyl-[cysteine desulfurase] + A + AMP + diphosphate + H(+). It functions in the pathway tRNA modification. Functionally, catalyzes the ATP-dependent 2-thiolation of cytidine in position 32 of tRNA, to form 2-thiocytidine (s(2)C32). The sulfur atoms are provided by the cysteine/cysteine desulfurase (IscS) system. In Shewanella baltica (strain OS195), this protein is tRNA-cytidine(32) 2-sulfurtransferase.